Consider the following 355-residue polypeptide: Probable protein phosphatase 2C 21 (355 aa).

The PPM-type phosphatase domain occupies 23–329; that stretch reads RFGLSSMQGW…DNMTIILVQF (307 aa). Mn(2+) contacts are provided by Asp57, Gly58, Asp272, and Asp320. Residues 329–355 form a disordered region; sequence FKKPNPSETEPEDSKPEPSEDEPSSSS.

This sequence belongs to the PP2C family. The cofactor is Mg(2+). Mn(2+) serves as cofactor.

The catalysed reaction is O-phospho-L-seryl-[protein] + H2O = L-seryl-[protein] + phosphate. The enzyme catalyses O-phospho-L-threonyl-[protein] + H2O = L-threonyl-[protein] + phosphate. The sequence is that of Probable protein phosphatase 2C 21 (PPC4-2) from Arabidopsis thaliana (Mouse-ear cress).